Here is a 686-residue protein sequence, read N- to C-terminus: Mitochondrial Rho GTPase 1 (686 aa).

Residues 1 to 648 (MPRRDLVRIV…PAQRIRVVAR (648 aa)) are Cytoplasmic-facing. Positions 4–172 (RDLVRIVLVG…FYFAQKAVLH (169 aa)) constitute a Miro 1 domain. GTP contacts are provided by residues 13–20 (GDDGVGKS), 59–63 (DTSSN), and 117–120 (NKID). EF-hand domains follow at residues 188–223 (KCLEALKRIFTISDVDKDGLLNAHELNQFQQKCFST) and 341–376 (LGNQFLTDIFEAYDKDQDGALSQNELDDLFSTSPGN). Ca(2+)-binding residues include Asp-201, Asp-203, Asp-205, Glu-212, Asp-354, Asp-356, Asp-358, and Glu-365. Positions 455–624 (RNVFLCYVLG…WVAITRVALD (170 aa)) constitute a Miro 2 domain. Residues 464-471 (GATGSGKT), 506-510 (EMEGV), and 574-577 (TKSD) each bind GTP. A helical; Anchor for type IV membrane protein membrane pass occupies residues 649-665 (WGLAATTISAIVAVWMK). Residues 666 to 686 (WQGYSFKGIWGWMAKFAGLRT) lie on the Mitochondrial intermembrane side of the membrane.

Belongs to the mitochondrial Rho GTPase family.

The protein resides in the mitochondrion outer membrane. In terms of biological role, mitochondrial GTPase involved in mitochondrial trafficking. Probably involved in control of anterograde transport of mitochondria and their subcellular distribution. The chain is Mitochondrial Rho GTPase 1 (GEM1) from Cryptococcus neoformans var. neoformans serotype D (strain B-3501A) (Filobasidiella neoformans).